Consider the following 371-residue polypeptide: Bifunctional chorismate mutase/prephenate dehydratase (371 aa).

Residues 1 to 92 (MTLKNALLAF…DSVLTQKKWI (92 aa)) enclose the Chorismate mutase domain. Residues Arg11, Arg28, Lys39, Asp48, Glu52, Ser84, and Gln88 each contribute to the substrate site. The Prephenate dehydratase domain occupies 104-284 (KISFLGSFGS…NITQFIILAQ (181 aa)). The interval 285 to 371 (KKTYITNKKT…IKCIKILGCF (87 aa)) is regulatory.

It is found in the cytoplasm. It catalyses the reaction chorismate = prephenate. It carries out the reaction prephenate + H(+) = 3-phenylpyruvate + CO2 + H2O. The protein operates within amino-acid biosynthesis; L-phenylalanine biosynthesis; phenylpyruvate from prephenate: step 1/1. It participates in metabolic intermediate biosynthesis; prephenate biosynthesis; prephenate from chorismate: step 1/1. Its function is as follows. Catalyzes the Claisen rearrangement of chorismate to prephenate and the decarboxylation/dehydration of prephenate to phenylpyruvate. The polypeptide is Bifunctional chorismate mutase/prephenate dehydratase (pheA) (Buchnera aphidicola subsp. Baizongia pistaciae (strain Bp)).